The sequence spans 128 residues: Large ribosomal subunit protein bL19 (128 aa).

This sequence belongs to the bacterial ribosomal protein bL19 family.

In terms of biological role, this protein is located at the 30S-50S ribosomal subunit interface and may play a role in the structure and function of the aminoacyl-tRNA binding site. This is Large ribosomal subunit protein bL19 from Verminephrobacter eiseniae (strain EF01-2).